The sequence spans 390 residues: (S)-8-oxocitronellyl enol synthase CYC2 (390 aa).

NADP(+)-binding positions include 35–37 (TGI), 63–64 (RR), 81–82 (DI), 105–106 (TW), and Q143. Catalysis depends on residues K147 and Y179. Positions 147 and 179 each coordinate substrate. NADP(+) is bound by residues Y179 and 213–215 (SMM).

This sequence belongs to the short-chain dehydrogenases/reductases (SDR) family. Highly divergent.

The enzyme catalyses (S)-8-oxocitronellyl enol + NADP(+) = (6E)-8-oxogeranial + NADPH + H(+). It carries out the reaction (S)-8-oxocitronellyl enol + NAD(+) = (6E)-8-oxogeranial + NADH + H(+). In terms of biological role, iridoid synthase that catalyzes the first step in generation of the iridoid ring scaffold using the linear monoterpene (6E)-8-oxogeranial as substrate. Iridoids comprise a large family of distinctive bicyclic monoterpenes that possess a wide range of pharmacological activities, including anticancer, anti-inflammatory, antifungal and antibacterial activities. In Camptotheca acuminata (Happy tree), this protein is (S)-8-oxocitronellyl enol synthase CYC2.